Here is a 435-residue protein sequence, read N- to C-terminus: MSQCFAVKGIGGADQATLGSAEILVKYAQLADKRARVYVLVSTWLVVWGIWHVYFVEAVFPNAILWLHYYAASYEFGFVRRGLGGELIRMLTGDHFFAGAYTVLWTSITVWLIALAVVVWLILSTGNRSERRIMLALLVPVLPFAFSYAIYNPHPELFGMTALVAFSIFLTRAHTSRTRVILSTLYGLTMAVLALIHEAIPLEFALGAVLAIIVLSKNATGATRRICTALAIGPGTVSVLLLAVVGRRDIADQLCAHIPHGMVENPWAVATTPQRVLDYIFGRVESHADYHDWVCEHVTPWFNLDWITSAKLVAVVGFRALFGAFLLGLLFFVATTSMIRYVSAVPVRTFFAELRGNLALPVLASALLVPLFITAVDWTRWWVMITLDVAIVYILYAIDRPEIEQPPSRRNVQVFVCVVLVLAVIPTGSANNIGR.

9 helical membrane-spanning segments follow: residues 40-60 (LVST…EAVF), 103-123 (VLWT…WLIL), 133-153 (IMLA…IYNP), 195-215 (LIHE…IIVL), 226-246 (ICTA…AVVG), 313-333 (VAVV…LFFV), 358-378 (LALP…AVDW), 381-401 (WWVM…IDRP), and 414-434 (VFVC…NNIG).

It localises to the cell membrane. This is an uncharacterized protein from Mycobacterium bovis (strain ATCC BAA-935 / AF2122/97).